Reading from the N-terminus, the 402-residue chain is uncharacterized protein (402 aa).

At 1–11 (MTPSNYQRTRW) the chain is on the cytoplasmic side. A helical membrane pass occupies residues 12-34 (LTLIGTIITQFALGSVYTWSLFN). At 35–43 (GALSAKLDA) the chain is on the periplasmic side. The helical transmembrane segment at 44–66 (PVSQVAFSFGLLSLGLAISSSVA) threads the bilayer. Over 67–72 (GKLQER) the chain is Cytoplasmic. Residues 73-95 (FGVKRVTMASGILLGLGFFLTAH) traverse the membrane as a helical segment. The Periplasmic portion of the chain corresponds to 96 to 99 (SDNL). The chain crosses the membrane as a helical span at residues 100–122 (MMLWLSAGVLVGLADGAGYLLTL). At 123–134 (SNCVKWFPERKG) the chain is on the cytoplasmic side. The helical transmembrane segment at 135–154 (LISAFAIGSYGLGSLGFKFI) threads the bilayer. Residues 155 to 168 (DTQLLETVGLEKTF) lie on the Periplasmic side of the membrane. The helical transmembrane segment at 169-186 (VIWGAIALLMIVFGATLM) threads the bilayer. The Cytoplasmic portion of the chain corresponds to 187–216 (KDAPKQEVKTSNGVVEKDYTLAESMRKPQY). A helical membrane pass occupies residues 217–236 (WMLAVMFLTACMSGLYVIGV). Residues 237–250 (AKDIAQSLAHLDVV) lie on the Periplasmic side of the membrane. Residues 251 to 273 (SAANAVTVISIANLSGRLVLGIL) traverse the membrane as a helical segment. Over 274 to 279 (SDKIAR) the chain is Cytoplasmic. The chain crosses the membrane as a helical span at residues 280 to 302 (IRVITIGQVISLVGMAALLFAPL). Topologically, residues 303-306 (NAVT) are periplasmic. A helical transmembrane segment spans residues 307–329 (FFAAIACVAFNFGGTITVFPSLV). The Cytoplasmic portion of the chain corresponds to 330–341 (SEFFGLNNLAKN). The helical transmembrane segment at 342 to 364 (YGVIYLGFGIGSICGSIIASLFG) threads the bilayer. At 365–367 (GFY) the chain is on the periplasmic side. Residues 368 to 387 (VTFYVIFALLILSLALSTTI) form a helical membrane-spanning segment. Residues 388-402 (RQPEQKMLREAHGSL) are Cytoplasmic-facing.

This sequence belongs to the major facilitator superfamily. Interacts with BtsS and YpdA.

It localises to the cell inner membrane. Its function is as follows. Part of a nutrient-sensing regulatory network composed of the two-component regulatory systems BtsS/BtsR and YpdA/YpdB, and their respective target proteins, BtsT and YhjX. This is an uncharacterized protein from Escherichia coli (strain K12).